We begin with the raw amino-acid sequence, 359 residues long: Holliday junction branch migration complex subunit RuvB (359 aa).

A disordered region spans residues 1–22 (MAIVSSNAEPSKGAPRPKPSRV). The segment at 13–204 (GAPRPKPSRV…FGLIQRLEFY (192 aa)) is large ATPase domain (RuvB-L). Positions 43, 44, 85, 88, 89, 90, 194, 204, and 241 each coordinate ATP. Position 89 (threonine 89) interacts with Mg(2+). Residues 205–276 (GQEDLQAIVM…LVDEALTLHR (72 aa)) are small ATPAse domain (RuvB-S). A head domain (RuvB-H) region spans residues 279-359 (GKGLDASDRR…GWPADEGDAA (81 aa)). Positions 334 and 339 each coordinate DNA.

The protein belongs to the RuvB family. In terms of assembly, homohexamer. Forms an RuvA(8)-RuvB(12)-Holliday junction (HJ) complex. HJ DNA is sandwiched between 2 RuvA tetramers; dsDNA enters through RuvA and exits via RuvB. An RuvB hexamer assembles on each DNA strand where it exits the tetramer. Each RuvB hexamer is contacted by two RuvA subunits (via domain III) on 2 adjacent RuvB subunits; this complex drives branch migration. In the full resolvosome a probable DNA-RuvA(4)-RuvB(12)-RuvC(2) complex forms which resolves the HJ.

The protein resides in the cytoplasm. It catalyses the reaction ATP + H2O = ADP + phosphate + H(+). Its function is as follows. The RuvA-RuvB-RuvC complex processes Holliday junction (HJ) DNA during genetic recombination and DNA repair, while the RuvA-RuvB complex plays an important role in the rescue of blocked DNA replication forks via replication fork reversal (RFR). RuvA specifically binds to HJ cruciform DNA, conferring on it an open structure. The RuvB hexamer acts as an ATP-dependent pump, pulling dsDNA into and through the RuvAB complex. RuvB forms 2 homohexamers on either side of HJ DNA bound by 1 or 2 RuvA tetramers; 4 subunits per hexamer contact DNA at a time. Coordinated motions by a converter formed by DNA-disengaged RuvB subunits stimulates ATP hydrolysis and nucleotide exchange. Immobilization of the converter enables RuvB to convert the ATP-contained energy into a lever motion, pulling 2 nucleotides of DNA out of the RuvA tetramer per ATP hydrolyzed, thus driving DNA branch migration. The RuvB motors rotate together with the DNA substrate, which together with the progressing nucleotide cycle form the mechanistic basis for DNA recombination by continuous HJ branch migration. Branch migration allows RuvC to scan DNA until it finds its consensus sequence, where it cleaves and resolves cruciform DNA. The sequence is that of Holliday junction branch migration complex subunit RuvB from Synechococcus sp. (strain CC9311).